Consider the following 671-residue polypeptide: UvrABC system protein B (671 aa).

Residues Glu-25–Ile-178 enclose the Helicase ATP-binding domain. Gly-38 to Thr-45 provides a ligand contact to ATP. The short motif at Tyr-91 to Ile-114 is the Beta-hairpin element. The Helicase C-terminal domain occupies Gln-435 to Leu-601. The UVR domain maps to Glu-626–Lys-661.

It belongs to the UvrB family. In terms of assembly, forms a heterotetramer with UvrA during the search for lesions. Interacts with UvrC in an incision complex.

It localises to the cytoplasm. In terms of biological role, the UvrABC repair system catalyzes the recognition and processing of DNA lesions. A damage recognition complex composed of 2 UvrA and 2 UvrB subunits scans DNA for abnormalities. Upon binding of the UvrA(2)B(2) complex to a putative damaged site, the DNA wraps around one UvrB monomer. DNA wrap is dependent on ATP binding by UvrB and probably causes local melting of the DNA helix, facilitating insertion of UvrB beta-hairpin between the DNA strands. Then UvrB probes one DNA strand for the presence of a lesion. If a lesion is found the UvrA subunits dissociate and the UvrB-DNA preincision complex is formed. This complex is subsequently bound by UvrC and the second UvrB is released. If no lesion is found, the DNA wraps around the other UvrB subunit that will check the other stand for damage. In Thermodesulfovibrio yellowstonii (strain ATCC 51303 / DSM 11347 / YP87), this protein is UvrABC system protein B.